Consider the following 345-residue polypeptide: HTH-type transcriptional regulator reg1 (345 aa).

Residues 1 to 58 form the HTH lacI-type domain; sequence MTTRLADIAAQAGVSEATVSRVLNGKPGVAATTRQSVLAALDVLGYERPVRLRRRSAG. Positions 5 to 24 form a DNA-binding region, H-T-H motif; sequence LADIAAQAGVSEATVSRVLN.

Transcription repressor involved in control of expression of alpha-amylase and chitinase genes and of actinorhodin production. This is HTH-type transcriptional regulator reg1 (reg1) from Streptomyces lividans.